Consider the following 568-residue polypeptide: Urease subunit alpha (568 aa).

A Urease domain is found at 131-568 (GGIDTHIHFI…LPMAQRYFLF (438 aa)). His-136, His-138, and Lys-219 together coordinate Ni(2+). Lys-219 carries the N6-carboxylysine modification. His-221 is a substrate binding site. Residues His-248 and His-274 each coordinate Ni(2+). The Proton donor role is filled by His-322. Asp-362 serves as a coordination point for Ni(2+).

Belongs to the metallo-dependent hydrolases superfamily. Urease alpha subunit family. Heterotrimer of UreA (gamma), UreB (beta) and UreC (alpha) subunits. Three heterotrimers associate to form the active enzyme. Ni cation serves as cofactor. Carboxylation allows a single lysine to coordinate two nickel ions.

Its subcellular location is the cytoplasm. It carries out the reaction urea + 2 H2O + H(+) = hydrogencarbonate + 2 NH4(+). Its pathway is nitrogen metabolism; urea degradation; CO(2) and NH(3) from urea (urease route): step 1/1. The protein is Urease subunit alpha of Nostoc sp. (strain PCC 7120 / SAG 25.82 / UTEX 2576).